A 185-amino-acid polypeptide reads, in one-letter code: Ribosome-recycling factor (185 aa).

Belongs to the RRF family.

The protein resides in the cytoplasm. Functionally, responsible for the release of ribosomes from messenger RNA at the termination of protein biosynthesis. May increase the efficiency of translation by recycling ribosomes from one round of translation to another. In Symbiobacterium thermophilum (strain DSM 24528 / JCM 14929 / IAM 14863 / T), this protein is Ribosome-recycling factor.